Here is a 640-residue protein sequence, read N- to C-terminus: Chaperone protein DnaK (640 aa).

Thr-196 carries the phosphothreonine; by autocatalysis modification. The segment covering 547 to 569 (GDKIPSDKRPALEGALEKLKDAT) has biased composition (basic and acidic residues). 2 disordered regions span residues 547–575 (GDKI…GTTE) and 595–640 (LYQA…GNGK). Positions 603–615 (TNASEPTQNTDGS) are enriched in polar residues. Positions 625-634 (GEVENAEFEV) are enriched in acidic residues.

It belongs to the heat shock protein 70 family.

In terms of biological role, acts as a chaperone. This Chlorobium phaeobacteroides (strain DSM 266 / SMG 266 / 2430) protein is Chaperone protein DnaK.